The following is an 86-amino-acid chain: U15-lycotoxin-Ls1c (86 aa).

The signal sequence occupies residues 1 to 20; that stretch reads MNSKIFAVLLLLAFLSCVLS. The 46-residue stretch at 21 to 66 folds into the WAP domain; that stretch reads DQYCPKSSITACKKMNIRNDCCKDDDCTGGSWCCATPCGNICKYPT. Disulfide bonds link Cys-24–Cys-54, Cys-32–Cys-58, Cys-41–Cys-53, Cys-42–Cys-80, and Cys-47–Cys-62.

This sequence belongs to the venom protein 11 family. 01 (wap-1) subfamily. Post-translationally, contains 5 disulfide bonds. As to expression, expressed by the venom gland.

The protein localises to the secreted. Has antibacterial activity. The sequence is that of U15-lycotoxin-Ls1c from Lycosa singoriensis (Wolf spider).